Here is a 132-residue protein sequence, read N- to C-terminus: Intraflagellar transport protein 20 homolog A (132 aa).

Positions 87 to 112 form a coiled coil; that stretch reads EAQQQQLYALIAEKKMQLERYRIEYD.

Its subcellular location is the golgi apparatus. The protein localises to the cis-Golgi network. The protein resides in the cytoplasm. It is found in the cytoskeleton. It localises to the microtubule organizing center. Its subcellular location is the centrosome. The protein localises to the centriole. The protein resides in the cell projection. It is found in the cilium. Involved in ciliary process assembly. May play a role in the trafficking of ciliary membrane proteins from the Golgi complex to the cilium. Regulates the platelet-derived growth factor receptor-alpha (PDGFRA) signaling pathway. Plays an important role in spermatogenesis, particularly spermiogenesis, when germ cells form flagella. The polypeptide is Intraflagellar transport protein 20 homolog A (ift20-a) (Xenopus laevis (African clawed frog)).